Reading from the N-terminus, the 466-residue chain is Argininosuccinate lyase (466 aa).

This sequence belongs to the lyase 1 family. Argininosuccinate lyase subfamily.

It is found in the cytoplasm. The catalysed reaction is 2-(N(omega)-L-arginino)succinate = fumarate + L-arginine. Its pathway is amino-acid biosynthesis; L-arginine biosynthesis; L-arginine from L-ornithine and carbamoyl phosphate: step 3/3. In Synechococcus elongatus (strain ATCC 33912 / PCC 7942 / FACHB-805) (Anacystis nidulans R2), this protein is Argininosuccinate lyase.